Here is a 165-residue protein sequence, read N- to C-terminus: Large ribosomal subunit protein uL11 (165 aa).

Ser38 carries the post-translational modification Phosphoserine. Residue Lys40 forms a Glycyl lysine isopeptide (Lys-Gly) (interchain with G-Cter in SUMO2) linkage. A Glycyl lysine isopeptide (Lys-Gly) (interchain with G-Cter in ubiquitin) cross-link involves residue Lys48. Lys54 bears the N6-acetyllysine mark. A Glycyl lysine isopeptide (Lys-Gly) (interchain with G-Cter in ubiquitin) cross-link involves residue Lys83. Ser165 carries the post-translational modification Phosphoserine.

The protein belongs to the universal ribosomal protein uL11 family. Component of the large ribosomal subunit. Mature ribosomes consist of a small (40S) and a large (60S) subunit. The 40S subunit contains about 33 different proteins and 1 molecule of RNA (18S). The 60S subunit contains about 49 different proteins and 3 molecules of RNA (28S, 5.8S and 5S). In terms of processing, ubiquitinated at Lys-48 and Lys-83 by RNF14 and RNF25 in response to ribosome collisions (ribosome stalling).

The protein localises to the cytoplasm. Component of the large ribosomal subunit. The ribosome is a large ribonucleoprotein complex responsible for the synthesis of proteins in the cell. Binds directly to 26S ribosomal RNA. The protein is Large ribosomal subunit protein uL11 (RPL12) of Chinchilla lanigera (Long-tailed chinchilla).